We begin with the raw amino-acid sequence, 873 residues long: Sine oculis-binding protein homolog (873 aa).

A compositionally biased stretch (basic and acidic residues) spans 1–14; that stretch reads MAEMEKEGRPPENK. The interval 1-26 is disordered; sequence MAEMEKEGRPPENKRSRKPAHPVKRE. 2 consecutive FCS-type zinc fingers follow at residues 142–180 and 216–256; these read DDVS…KCFA and FKNN…KCLN. Disordered stretches follow at residues 308–339, 413–484, and 550–646; these read RRKA…DTAN, RGPP…PGAP, and KPPN…PGVL. Residues 318–339 show a composition bias toward polar residues; the sequence is AGQSQGPGPSASTTVSPSDTAN. Over residues 417–433 the composition is skewed to low complexity; that stretch reads HHASNPNSPLSNPMLPG. Residues 460–484 are compositionally biased toward pro residues; sequence IHPPSTPTMPGNPPGLLPPPPPGAP. Residues 614–625 are compositionally biased toward basic and acidic residues; that stretch reads EHGRSEVVDLTR. Positions 620–624 match the SUMO interaction motif 1 (SIM); mediates the binding to polysumoylated substrates motif; that stretch reads VVDLT. Residue Ser629 is modified to Phosphoserine. Residues 653–657 carry the SUMO interaction motif 2 (SIM); mediates the binding to polysumoylated substrates motif; it reads VIDLT. A Glycyl lysine isopeptide (Lys-Gly) (interchain with G-Cter in SUMO2) cross-link involves residue Lys677. A Phosphoserine modification is found at Ser699. The interval 730-771 is disordered; sequence AAAEGAKSAEPPPEQPPPPPPPAPPKKLLSPEEPAVSELESV. The segment covering 739–754 has biased composition (pro residues); sequence EPPPEQPPPPPPPAPP.

It belongs to the SOBP family. As to quaternary structure, interacts (via SIM domains) with SUMO1 and SUMO2.

Its function is as follows. Implicated in development of the cochlea. The protein is Sine oculis-binding protein homolog of Homo sapiens (Human).